A 300-amino-acid chain; its full sequence is F-box/LRR-repeat protein 15 (300 aa).

N-acetylmethionine is present on Met-1. The region spanning 19–66 (LLDLPWEDVLLPHVLSRVPLRQLLWLQRVSRAFRALVQLHLARLRRFD) is the F-box domain. The interval 113-269 (NPQLRSVALA…EPSLSRLRKR (157 aa)) is interaction with SMURF1. LRR repeat units follow at residues 141-162 (RLQR…RGLA), 167-188 (ALEE…VYLA), 194-215 (GLRN…QELA), 220-241 (ELQH…RTLA), and 246-267 (ALRS…SRLR).

The protein belongs to the FBXL15 family. In terms of assembly, part of the SCF (SKP1-CUL1-F-box) E3 ubiquitin-protein ligase complex SCF(FBXL15) composed of CUL1, SKP1, RBX1 and FBXL15.

Its subcellular location is the cytoplasm. Its pathway is protein modification; protein ubiquitination. In terms of biological role, substrate recognition component of a SCF (SKP1-CUL1-F-box protein) E3 ubiquitin-protein ligase complex which mediates the ubiquitination and subsequent proteasomal degradation of SMURF1, thereby acting as a positive regulator of the BMP signaling pathway. Required for dorsal/ventral pattern formation and bone mass maintenance. Also mediates ubiquitination of SMURF2 and WWP2. This Bos taurus (Bovine) protein is F-box/LRR-repeat protein 15 (FBXL15).